The chain runs to 545 residues: Chaperonin GroEL 5 (545 aa).

ATP-binding positions include 30–33 (TLGP), Lys-51, 87–91 (DGTTT), Gly-415, and Asp-495.

It belongs to the chaperonin (HSP60) family. As to quaternary structure, forms a cylinder of 14 subunits composed of two heptameric rings stacked back-to-back. Interacts with the co-chaperonin GroES.

Its subcellular location is the cytoplasm. The enzyme catalyses ATP + H2O + a folded polypeptide = ADP + phosphate + an unfolded polypeptide.. Together with its co-chaperonin GroES, plays an essential role in assisting protein folding. The GroEL-GroES system forms a nano-cage that allows encapsulation of the non-native substrate proteins and provides a physical environment optimized to promote and accelerate protein folding. The chain is Chaperonin GroEL 5 from Sinorhizobium medicae (strain WSM419) (Ensifer medicae).